We begin with the raw amino-acid sequence, 106 residues long: Gas vesicle protein J (106 aa).

This sequence belongs to the gas vesicle GvpA family.

The protein resides in the gas vesicle. Functionally, a minor component of the gas vesicle, might be involved in nucleating gas vesicle formation. Gas vesicles are hollow, gas filled proteinaceous nanostructures found in some microorganisms. It is not clear what function gas vesicles perform in soil bacteria. This Streptomyces sp. (strain CB03234) protein is Gas vesicle protein J.